We begin with the raw amino-acid sequence, 488 residues long: Ribulose bisphosphate carboxylase large chain (488 aa).

Substrate is bound by residues asparagine 127 and threonine 177. The Proton acceptor role is filled by lysine 179. Lysine 181 lines the substrate pocket. Residues lysine 205, aspartate 207, and glutamate 208 each coordinate Mg(2+). Residue lysine 205 is modified to N6-carboxylysine. The Proton acceptor role is filled by histidine 297. Arginine 298, histidine 330, and serine 382 together coordinate substrate.

The protein belongs to the RuBisCO large chain family. Type I subfamily. In terms of assembly, heterohexadecamer of 8 large chains and 8 small chains. Mg(2+) is required as a cofactor.

It localises to the plastid. The protein resides in the chloroplast. It catalyses the reaction 2 (2R)-3-phosphoglycerate + 2 H(+) = D-ribulose 1,5-bisphosphate + CO2 + H2O. The catalysed reaction is D-ribulose 1,5-bisphosphate + O2 = 2-phosphoglycolate + (2R)-3-phosphoglycerate + 2 H(+). RuBisCO catalyzes two reactions: the carboxylation of D-ribulose 1,5-bisphosphate, the primary event in carbon dioxide fixation, as well as the oxidative fragmentation of the pentose substrate in the photorespiration process. Both reactions occur simultaneously and in competition at the same active site. This chain is Ribulose bisphosphate carboxylase large chain, found in Guillardia theta (Cryptophyte).